A 220-amino-acid chain; its full sequence is Photosynthetic NDH subunit of lumenal location 3, chloroplastic (220 aa).

The transit peptide at 1-35 directs the protein to the chloroplast; that stretch reads MAHFIDLNSLTNTLPSLPKLPESRKTGKSSGFACR. A thylakoid-targeting transit peptide spans 36-77; that stretch reads RTEEFQEPDSVQITRRMTLGFAVSIGLTGILGENNVSLAQDN.

Belongs to the PsbQ family. In terms of assembly, part of the chloroplast NDH complex, composed of a mixture of chloroplast and nucleus encoded subunits. Component of the NDH lumenal subcomplex, at least composed of PnsL1, PnsL2, PnsL3, PnsL4 and PnsL5.

Its subcellular location is the plastid. It is found in the chloroplast thylakoid membrane. In terms of biological role, NDH shuttles electrons from NAD(P)H:plastoquinone, via FMN and iron-sulfur (Fe-S) centers, to quinones in the photosynthetic chain and possibly in a chloroplast respiratory chain. The immediate electron acceptor for the enzyme in this species is believed to be plastoquinone. Couples the redox reaction to proton translocation, and thus conserves the redox energy in a proton gradient. Required for both formation and activity of the chloroplast NAD(P)H dehydrogenase (NDH) complex. The polypeptide is Photosynthetic NDH subunit of lumenal location 3, chloroplastic (Arabidopsis thaliana (Mouse-ear cress)).